The sequence spans 535 residues: Growth factor receptor-bound protein 7 (535 aa).

Residues 1–90 form a disordered region; the sequence is MELDLSPTHL…PILGGSSGAR (90 aa). The segment covering 21 to 37 has biased composition (pro residues); sequence PATPPETPPPPDNPPPG. One can recognise a Ras-associating domain in the interval 99–185; it reads RLCVVKVYSE…SRFIFRKNFA (87 aa). A phosphotyrosine; by FAK1 mark is found at tyrosine 187 and tyrosine 341. The 114-residue stretch at 228–341 folds into the PH domain; sequence FPEIQGFLQL…WLAAFRLFKY (114 aa). Residue serine 364 is modified to Phosphoserine. In terms of domain architecture, SH2 spans 434 to 530; it reads WFHGRISREE…ILPCLLRHCC (97 aa).

The protein belongs to the GRB7/10/14 family. As to quaternary structure, homodimer. Interacts (via SH2 domain) with EGFR, ERBB2, ERBB3 (when phosphorylated), ERBB4 (when phosphorylated), EPHB1, INSR, FGFR1, PDGFRA (tyrosine phosphorylated) and PDGFRB (tyrosine phosphorylated). Interacts with SHC1. Interacts with RND1. Interacts (when tyrosine phosphorylated) with FHL2 and HAX1. Interacts (via SH2 domain) with RET and PTK2/FAK1. Interacts (when not phosphorylated) with ELAVL1. In stressed cells, but not in normal cells, part of a complex that contains at least GRB7, PTK2/FAK1, STAU1, ELAVL1 and TIA1. Interacts (via SH2 domain) with KIT (phosphorylated). Interacts (via SH2 domain) with TEK/TIE2 (tyrosine phosphorylated). Post-translationally, phosphorylated on serine and threonine residues in response to activation of receptor kinases. Phosphorylated on tyrosine residues by TEK/TIE2. Phosphorylated on tyrosine residues by PTK2/FAK1, and possibly also other kinases. Phosphorylation is enhanced by activation of receptor kinases. Tyrosine phosphorylation is essential for activation of down-stream protein kinases. Phosphorylated on tyrosine residues in response to NTN1 signaling. Phosphorylation promotes stress granule disassembly during recovery after cellular stress.

The protein resides in the cytoplasm. It is found in the cell projection. It localises to the cell junction. Its subcellular location is the focal adhesion. The protein localises to the cell membrane. The protein resides in the cytoplasmic granule. Adapter protein that interacts with the cytoplasmic domain of numerous receptor kinases and modulates down-stream signaling. Promotes activation of down-stream protein kinases, including STAT3, AKT1, MAPK1 and/or MAPK3. Promotes activation of HRAS. Plays a role in signal transduction in response to EGF. Plays a role in the regulation of cell proliferation and cell migration. Plays a role in the assembly and stability of RNA stress granules. Binds to the 5'UTR of target mRNA molecules and represses translation of target mRNA species, when not phosphorylated. Phosphorylation impairs RNA binding and promotes stress granule disassembly during recovery after cellular stress. The polypeptide is Growth factor receptor-bound protein 7 (Grb7) (Mus musculus (Mouse)).